The primary structure comprises 390 residues: Na(+)/H(+) antiporter NhaA (390 aa).

Transmembrane regions (helical) follow at residues 13-33, 61-81, 99-119, 129-149, 158-178, 181-201, 209-229, 259-279, 297-317, 330-350, and 367-387; these read FQLE…ALVI, LSVH…FVTL, LLPI…YVFI, GWAI…SLLG, VFLT…IAFF, GDLS…LLTL, FIPY…SGIH, AISP…NAGV, ILLG…FIAV, WLSL…SLFV, and IGVL…LLYA.

It belongs to the NhaA Na(+)/H(+) (TC 2.A.33) antiporter family.

The protein resides in the cell inner membrane. The catalysed reaction is Na(+)(in) + 2 H(+)(out) = Na(+)(out) + 2 H(+)(in). In terms of biological role, na(+)/H(+) antiporter that extrudes sodium in exchange for external protons. The chain is Na(+)/H(+) antiporter NhaA from Pelagibacter ubique (strain HTCC1062).